Reading from the N-terminus, the 51-residue chain is Lipid-anchored plasma membrane protein CPP3 (51 aa).

The tract at residues 1–28 is disordered; that stretch reads MRHHQNMHYAPQQQPVYVQQPPPRRESG.

This sequence belongs to the CYSTM1 family. Palmitoylated near the C-terminus.

Its subcellular location is the cell membrane. This is Lipid-anchored plasma membrane protein CPP3 from Saccharomyces cerevisiae (strain ATCC 204508 / S288c) (Baker's yeast).